Reading from the N-terminus, the 141-residue chain is Protein Turandot Z (141 aa).

A signal peptide spans methionine 1–alanine 23.

Belongs to the Turandot family.

Its subcellular location is the secreted. Functionally, a humoral factor that may play a role in stress tolerance. This is Protein Turandot Z from Drosophila yakuba (Fruit fly).